Here is a 461-residue protein sequence, read N- to C-terminus: Ribosomal protein uS12 methylthiotransferase RimO (461 aa).

The region spanning 13-128 is the MTTase N-terminal domain; that stretch reads PKVGFVSLGC…VMQHVHMHLP (116 aa). [4Fe-4S] cluster is bound by residues cysteine 22, cysteine 58, cysteine 87, cysteine 159, cysteine 163, and cysteine 166. The Radical SAM core domain occupies 145-390; sequence LTPRHYAYLK…MEVAEEVSAK (246 aa). A TRAM domain is found at 393 to 461; sequence AKKVGKTLKV…ADGHDLWGEV (69 aa).

Belongs to the methylthiotransferase family. RimO subfamily. It depends on [4Fe-4S] cluster as a cofactor.

The protein localises to the cytoplasm. It carries out the reaction L-aspartate(89)-[ribosomal protein uS12]-hydrogen + (sulfur carrier)-SH + AH2 + 2 S-adenosyl-L-methionine = 3-methylsulfanyl-L-aspartate(89)-[ribosomal protein uS12]-hydrogen + (sulfur carrier)-H + 5'-deoxyadenosine + L-methionine + A + S-adenosyl-L-homocysteine + 2 H(+). In terms of biological role, catalyzes the methylthiolation of an aspartic acid residue of ribosomal protein uS12. In Paraburkholderia xenovorans (strain LB400), this protein is Ribosomal protein uS12 methylthiotransferase RimO.